Here is a 423-residue protein sequence, read N- to C-terminus: Serine--tRNA ligase 1 (423 aa).

231 to 233 (TAE) is a binding site for L-serine. 262–264 (RSE) is an ATP binding site. L-serine is bound at residue E285. 349–352 (EISS) contacts ATP. S384 contributes to the L-serine binding site.

This sequence belongs to the class-II aminoacyl-tRNA synthetase family. Type-1 seryl-tRNA synthetase subfamily. In terms of assembly, homodimer. The tRNA molecule binds across the dimer.

The protein localises to the cytoplasm. It carries out the reaction tRNA(Ser) + L-serine + ATP = L-seryl-tRNA(Ser) + AMP + diphosphate + H(+). The catalysed reaction is tRNA(Sec) + L-serine + ATP = L-seryl-tRNA(Sec) + AMP + diphosphate + H(+). It functions in the pathway aminoacyl-tRNA biosynthesis; selenocysteinyl-tRNA(Sec) biosynthesis; L-seryl-tRNA(Sec) from L-serine and tRNA(Sec): step 1/1. Catalyzes the attachment of serine to tRNA(Ser). Is also able to aminoacylate tRNA(Sec) with serine, to form the misacylated tRNA L-seryl-tRNA(Sec), which will be further converted into selenocysteinyl-tRNA(Sec). This Enterococcus faecalis (strain ATCC 700802 / V583) protein is Serine--tRNA ligase 1.